Reading from the N-terminus, the 448-residue chain is N-succinylarginine dihydrolase (448 aa).

Substrate is bound by residues 19–28, N110, and 137–138; these read AGLSYGNVAS and HR. The active site involves E174. Residue R214 participates in substrate binding. Residue H250 is part of the active site. Substrate-binding residues include D252 and N364. The active-site Nucleophile is the C370.

The protein belongs to the succinylarginine dihydrolase family. In terms of assembly, homodimer.

It carries out the reaction N(2)-succinyl-L-arginine + 2 H2O + 2 H(+) = N(2)-succinyl-L-ornithine + 2 NH4(+) + CO2. It functions in the pathway amino-acid degradation; L-arginine degradation via AST pathway; L-glutamate and succinate from L-arginine: step 2/5. Functionally, catalyzes the hydrolysis of N(2)-succinylarginine into N(2)-succinylornithine, ammonia and CO(2). The protein is N-succinylarginine dihydrolase of Pseudoalteromonas translucida (strain TAC 125).